The primary structure comprises 1038 residues: Ras GTPase-activating protein 1 (1038 aa).

Met1 carries the N-acetylmethionine modification. Residues 1-16 (MMAAEAGSEEGGPATA) show a composition bias toward low complexity. Disordered regions lie at residues 1 to 24 (MMAAEAGSEEGGPATAGTGGAAAT) and 117 to 152 (ETLGPGGGFPPLPPPPLLPPLGSGLGTVDEGDSLDG). A compositionally biased stretch (pro residues) spans 124 to 135 (GFPPLPPPPLLP). In terms of domain architecture, SH2 1 spans 172–263 (WYHGKLDRTI…LKGEKLLYPV (92 aa)). The 63-residue stretch at 270 to 332 (EDRRRVRAIL…VEDLVEEVGR (63 aa)) folds into the SH3 domain. Positions 342-432 (WFHGKISKQE…VEGYYLKEPV (91 aa)) constitute an SH2 2 domain. One can recognise a PH domain in the interval 465-568 (NIVKKGYLLK…WMKGLQAFCS (104 aa)). Residues 568-681 (SLRKSSPGTS…QKGHATDEWF (114 aa)) enclose the C2 domain. Tyr606 carries the post-translational modification Phosphotyrosine. In terms of domain architecture, Ras-GAP spans 755–965 (KLESLLLCTL…HRMIMFLDEL (211 aa)). Ser822 is modified (phosphoserine).

Interacts with SQSTM1. Interacts with SPSB1; the interaction does not promote degradation. Interacts with CAV2 (tyrosine phosphorylated form). Directly interacts with NCK1. Interacts with PDGFRB (tyrosine phosphorylated). Interacts (via SH2 domain) with the 'Tyr-9' phosphorylated form of PDPK1. Interacts with tyrosine-phosphorylated EPHB4. Post-translationally, phosphorylated by SRC and LCK. The phosphorylation SRC inhibits its ability to stimulate the Ras-GTPase activity, whereas phosphorylation by LCK does not display any effect on stimulation activity.

Its subcellular location is the cytoplasm. Its function is as follows. Inhibitory regulator of the Ras-cyclic AMP pathway. Stimulates the GTPase of normal but not oncogenic Ras p21. This chain is Ras GTPase-activating protein 1 (Rasa1), found in Rattus norvegicus (Rat).